Consider the following 65-residue polypeptide: Hirudin-3A (65 aa).

The tract at residues 1-3 is interaction with thrombin active site; that stretch reads VVY. Intrachain disulfides connect Cys6/Cys14, Cys16/Cys28, and Cys22/Cys39. A disordered region spans residues 39–65; that stretch reads CVTGEGTPKPQSHNDGDFEEIPEEYLQ. Thr45 carries an O-linked (GalNAc...) threonine glycan. Residues 55–65 form an interaction with fibrinogen-binding exosite of thrombin region; that stretch reads DFEEIPEEYLQ. A compositionally biased stretch (acidic residues) spans 55-65; it reads DFEEIPEEYLQ. Tyr63 bears the Sulfotyrosine mark.

The protein belongs to the protease inhibitor I14 (hirudin) family.

Its subcellular location is the secreted. Functionally, hirudin is a potent thrombin-specific protease inhibitor. It forms a stable non-covalent complex with alpha-thrombin, thereby abolishing its ability to cleave fibrinogen. The protein is Hirudin-3A of Hirudo medicinalis (Medicinal leech).